The primary structure comprises 147 residues: uncharacterized protein (147 aa).

This is an uncharacterized protein from Homo sapiens (Human).